Consider the following 366-residue polypeptide: Molybdopterin synthase catalytic subunit (366 aa).

Residues 101–102 (HR), Lys-117, and 124–126 (KKE) contribute to the substrate site.

The protein belongs to the MoaE family. MOCS2B subfamily. As to quaternary structure, heterotetramer; composed of 2 small (Mocs2A) and 2 large (Mocs2B) subunits.

It is found in the cytoplasm. It catalyses the reaction 2 [molybdopterin-synthase sulfur-carrier protein]-C-terminal-Gly-aminoethanethioate + cyclic pyranopterin phosphate + H2O = molybdopterin + 2 [molybdopterin-synthase sulfur-carrier protein]-C-terminal Gly-Gly + 2 H(+). It functions in the pathway cofactor biosynthesis; molybdopterin biosynthesis. Functionally, catalytic subunit of the molybdopterin synthase complex, a complex that catalyzes the conversion of precursor Z into molybdopterin. Acts by mediating the incorporation of 2 sulfur atoms from thiocarboxylated Mocs2A into precursor Z to generate a dithiolene group. This Drosophila mojavensis (Fruit fly) protein is Molybdopterin synthase catalytic subunit.